Here is a 527-residue protein sequence, read N- to C-terminus: Pentatricopeptide repeat-containing protein At5g41170, mitochondrial (527 aa).

The transit peptide at 1–35 (MAMRFFQLHRNRLVKGNSGKALSFSRLLDLSFWVR) directs the protein to the mitochondrion. PPR repeat units lie at residues 36 to 70 (AFCN…RPLP), 71 to 105 (SIID…GVSH), 106 to 140 (DLYT…GFEP), 141 to 175 (DIVT…GIKP), 176 to 210 (DVVM…GIRP), 211 to 245 (DVVM…KIKP), 246 to 280 (DVIT…SIAP), 281 to 315 (NIFT…GCFP), 316 to 350 (DVVA…GLTG), 351 to 385 (NTIT…GVPP), 386 to 420 (NIRT…EMDG), 424 to 458 (NIWT…EMDI), 459 to 493 (GIIT…GVKP), and 494 to 527 (NVVT…DGVS).

It belongs to the PPR family. P subfamily.

The protein resides in the mitochondrion. This chain is Pentatricopeptide repeat-containing protein At5g41170, mitochondrial, found in Arabidopsis thaliana (Mouse-ear cress).